Here is a 301-residue protein sequence, read N- to C-terminus: Protoheme IX farnesyltransferase 2 (301 aa).

9 helical membrane passes run Val29–Val49, Val51–Leu71, Ala101–Asn121, Leu123–Leu143, Asn150–Thr170, Ala177–Ile197, Cys223–Met243, Cys244–Trp264, and Phe281–Ser301.

The protein belongs to the UbiA prenyltransferase family. Protoheme IX farnesyltransferase subfamily.

It is found in the cell inner membrane. It carries out the reaction heme b + (2E,6E)-farnesyl diphosphate + H2O = Fe(II)-heme o + diphosphate. It functions in the pathway porphyrin-containing compound metabolism; heme O biosynthesis; heme O from protoheme: step 1/1. In terms of biological role, converts heme B (protoheme IX) to heme O by substitution of the vinyl group on carbon 2 of heme B porphyrin ring with a hydroxyethyl farnesyl side group. The protein is Protoheme IX farnesyltransferase 2 of Shewanella sp. (strain W3-18-1).